A 629-amino-acid chain; its full sequence is DNA mismatch repair protein MutL (629 aa).

A disordered region spans residues 376 to 396; that stretch reads QYHEKPQQNQPHFSNTPVLPN. Residues 382–396 are compositionally biased toward polar residues; it reads QQNQPHFSNTPVLPN.

It belongs to the DNA mismatch repair MutL/HexB family.

In terms of biological role, this protein is involved in the repair of mismatches in DNA. It is required for dam-dependent methyl-directed DNA mismatch repair. May act as a 'molecular matchmaker', a protein that promotes the formation of a stable complex between two or more DNA-binding proteins in an ATP-dependent manner without itself being part of a final effector complex. This chain is DNA mismatch repair protein MutL, found in Haemophilus influenzae (strain PittEE).